The sequence spans 296 residues: MNLQTMIRTLQDYWSEQGCIMLQSYDVEKGAGTMSPYTFLKAIGPEPWKAGYVEPSRRPADGRYGENPNRLFQHHQFQVVMKPSPDNIQELYLGSLEKLGINPLEHDIRFVEDNWENPSLGCAGLGWEVWLDGMEITQFTYFQQVGGLECFPVTSEITYGVERLASYIQDKENVFDLEWTEGISYRDIFFQAEFENSTYAFETSNTDMLLTLFDTYEREATRQMQDGLVFPAYDYVLKCSHTFNLLDARGVVSVTERAQYIGRIRNLARRIAKTFYESREKLGFPLVKEEGGKRHE.

This sequence belongs to the class-II aminoacyl-tRNA synthetase family. As to quaternary structure, tetramer of two alpha and two beta subunits.

The protein localises to the cytoplasm. The catalysed reaction is tRNA(Gly) + glycine + ATP = glycyl-tRNA(Gly) + AMP + diphosphate. The chain is Glycine--tRNA ligase alpha subunit from Listeria monocytogenes serotype 4b (strain CLIP80459).